Reading from the N-terminus, the 86-residue chain is Protein Tat (86 aa).

Residues 1–21 form a disordered region; the sequence is MDPVDPNIEPWNHPGSQPKTA. Residues 1 to 24 are interaction with human CREBBP; it reads MDPVDPNIEPWNHPGSQPKTACNR. The transactivation stretch occupies residues 1-48; that stretch reads MDPVDPNIEPWNHPGSQPKTACNRCHCKKCCYHCQVCFITKGLGISYG. Residues Cys22, Cys25, and Cys27 each coordinate Zn(2+). The cysteine-rich stretch occupies residues 22-37; the sequence is CNRCHCKKCCYHCQVC. At Lys28 the chain carries N6-acetyllysine; by host PCAF. Zn(2+)-binding residues include Cys30, His33, Cys34, and Cys37. A core region spans residues 38–48; it reads FITKGLGISYG. Residues 47–86 form a disordered region; the sequence is YGRKKRRQRRRPSQGGQTHQDPIPKQPSSQPRGDPTGPKE. Positions 48–58 are enriched in basic residues; the sequence is GRKKRRQRRRP. The short motif at 49 to 57 is the Nuclear localization signal, RNA-binding (TAR), and protein transduction element; sequence RKKRRQRRR. The interaction with the host capping enzyme RNGTT stretch occupies residues 49–86; the sequence is RKKRRQRRRPSQGGQTHQDPIPKQPSSQPRGDPTGPKE. N6-acetyllysine; by host EP300 and GCN5L2 occurs at positions 50 and 51. Asymmetric dimethylarginine; by host PRMT6 occurs at positions 52 and 53. Over residues 60 to 77 the composition is skewed to polar residues; sequence QGGQTHQDPIPKQPSSQP. Residue Lys71 forms a Glycyl lysine isopeptide (Lys-Gly) (interchain with G-Cter in ubiquitin) linkage. The short motif at 78 to 80 is the Cell attachment site element; it reads RGD.

The protein belongs to the lentiviruses Tat family. Interacts with host CCNT1. Associates with the P-TEFb complex composed at least of Tat, P-TEFb (CDK9 and CCNT1), TAR RNA, RNA Pol II. Recruits the HATs CREBBP, TAF1/TFIID, EP300, PCAF and GCN5L2. Interacts with host KAT5/Tip60; this interaction targets the latter to degradation. Interacts with the host deacetylase SIRT1. Interacts with host capping enzyme RNGTT; this interaction stimulates RNGTT. Binds to host KDR, and to the host integrins ITGAV/ITGB3 and ITGA5/ITGB1. Interacts with host KPNB1/importin beta-1 without previous binding to KPNA1/importin alpha-1. Interacts with EIF2AK2. Interacts with host nucleosome assembly protein NAP1L1; this interaction may be required for the transport of Tat within the nucleus, since the two proteins interact at the nuclear rim. Interacts with host C1QBP/SF2P32; this interaction involves lysine-acetylated Tat. Interacts with the host chemokine receptors CCR2, CCR3 and CXCR4. Interacts with host DPP4/CD26; this interaction may trigger an anti-proliferative effect. Interacts with host LDLR. Interacts with the host extracellular matrix metalloproteinase MMP1. Interacts with host PRMT6; this interaction mediates Tat's methylation. Interacts with, and is ubiquitinated by MDM2/Hdm2. Interacts with host PSMC3 and HTATIP2. Interacts with STAB1; this interaction may overcome SATB1-mediated repression of IL2 and IL2RA (interleukin) in T cells by binding to the same domain than HDAC1. Interacts (when acetylated) with human CDK13, thereby increasing HIV-1 mRNA splicing and promoting the production of the doubly spliced HIV-1 protein Nef. Interacts with host TBP; this interaction modulates the activity of transcriptional pre-initiation complex. Interacts with host RELA. Interacts with host PLSCR1; this interaction negatively regulates Tat transactivation activity by altering its subcellular distribution. In terms of processing, asymmetrical arginine methylation by host PRMT6 seems to diminish the transactivation capacity of Tat and affects the interaction with host CCNT1. Post-translationally, acetylation by EP300, CREBBP, GCN5L2/GCN5 and PCAF regulates the transactivation activity of Tat. EP300-mediated acetylation of Lys-50 promotes dissociation of Tat from the TAR RNA through the competitive binding to PCAF's bromodomain. In addition, the non-acetylated Tat's N-terminus can also interact with PCAF. PCAF-mediated acetylation of Lys-28 enhances Tat's binding to CCNT1. Lys-50 is deacetylated by SIRT1. Polyubiquitination by host MDM2 does not target Tat to degradation, but activates its transactivation function and fosters interaction with CCNT1 and TAR RNA. In terms of processing, phosphorylated by EIF2AK2 on serine and threonine residues adjacent to the basic region important for TAR RNA binding and function. Phosphorylation of Tat by EIF2AK2 is dependent on the prior activation of EIF2AK2 by dsRNA.

It localises to the host nucleus. The protein localises to the host nucleolus. It is found in the host cytoplasm. The protein resides in the secreted. In terms of biological role, transcriptional activator that increases RNA Pol II processivity, thereby increasing the level of full-length viral transcripts. Recognizes a hairpin structure at the 5'-LTR of the nascent viral mRNAs referred to as the transactivation responsive RNA element (TAR) and recruits the cyclin T1-CDK9 complex (P-TEFb complex) that will in turn hyperphosphorylate the RNA polymerase II to allow efficient elongation. The CDK9 component of P-TEFb and other Tat-activated kinases hyperphosphorylate the C-terminus of RNA Pol II that becomes stabilized and much more processive. Other factors such as HTATSF1/Tat-SF1, SUPT5H/SPT5, and HTATIP2 are also important for Tat's function. Besides its effect on RNA Pol II processivity, Tat induces chromatin remodeling of proviral genes by recruiting the histone acetyltransferases (HATs) CREBBP, EP300 and PCAF to the chromatin. This also contributes to the increase in proviral transcription rate, especially when the provirus integrates in transcriptionally silent region of the host genome. To ensure maximal activation of the LTR, Tat mediates nuclear translocation of NF-kappa-B by interacting with host RELA. Through its interaction with host TBP, Tat may also modulate transcription initiation. Tat can reactivate a latently infected cell by penetrating in it and transactivating its LTR promoter. In the cytoplasm, Tat is thought to act as a translational activator of HIV-1 mRNAs. Extracellular circulating Tat can be endocytosed by surrounding uninfected cells via the binding to several surface receptors such as CD26, CXCR4, heparan sulfate proteoglycans (HSPG) or LDLR. Neurons are rarely infected, but they internalize Tat via their LDLR. Through its interaction with nuclear HATs, Tat is potentially able to control the acetylation-dependent cellular gene expression. Modulates the expression of many cellular genes involved in cell survival, proliferation or in coding for cytokines or cytokine receptors. Tat plays a role in T-cell and neurons apoptosis. Tat induced neurotoxicity and apoptosis probably contribute to neuroAIDS. Circulating Tat also acts as a chemokine-like and/or growth factor-like molecule that binds to specific receptors on the surface of the cells, affecting many cellular pathways. In the vascular system, Tat binds to ITGAV/ITGB3 and ITGA5/ITGB1 integrins dimers at the surface of endothelial cells and competes with bFGF for heparin-binding sites, leading to an excess of soluble bFGF. The protein is Protein Tat of Human immunodeficiency virus type 1 group M subtype D (isolate Z2/CDC-Z34) (HIV-1).